A 256-amino-acid chain; its full sequence is Neuroendocrine secretory protein 55 (256 aa).

An N-terminal signal peptide occupies residues 1 to 46; sequence MDRRSRAHQWRRARHNYNDLCPPIGRRAATALLWLSCSIALLRALA. Residues 61 to 256 are disordered; the sequence is SFLNAHHRSA…RKGPIPIRRH (196 aa). Positions 86–103 are enriched in basic and acidic residues; that stretch reads ESDHEHEEAEPELARPEC. Acidic residues-rich tracts occupy residues 104–139 and 206–216; these read LEYD…ETEP and LDEDPRDPEES. Over residues 225-236 the composition is skewed to basic residues; that stretch reads QPRRCKTRRPAR.

This sequence belongs to the NESP55 family. Post-translationally, binds keratan sulfate chains. May be proteolytically processed to give rise to a number of active peptides.

Its subcellular location is the cytoplasmic vesicle. The protein resides in the secretory vesicle. The protein localises to the synaptic vesicle. It is found in the secreted. In Rattus norvegicus (Rat), this protein is Neuroendocrine secretory protein 55.